The chain runs to 561 residues: Urocanate hydratase (561 aa).

NAD(+)-binding positions include glycine 52–glycine 53, glutamine 130, glycine 176–glycine 178, glutamate 196, arginine 201, asparagine 242–alanine 243, glutamine 263–histidine 267, tyrosine 273–leucine 274, and tyrosine 322. Cysteine 410 is an active-site residue. Glycine 492 is a binding site for NAD(+).

Belongs to the urocanase family. It depends on NAD(+) as a cofactor.

The protein resides in the cytoplasm. The catalysed reaction is 4-imidazolone-5-propanoate = trans-urocanate + H2O. It functions in the pathway amino-acid degradation; L-histidine degradation into L-glutamate; N-formimidoyl-L-glutamate from L-histidine: step 2/3. Catalyzes the conversion of urocanate to 4-imidazolone-5-propionate. The sequence is that of Urocanate hydratase from Salmonella agona (strain SL483).